Here is a 194-residue protein sequence, read N- to C-terminus: Glycerol-3-phosphate acyltransferase (194 aa).

5 helical membrane-spanning segments follow: residues 4–24 (EIVL…LLLA), 78–98 (EIWV…TVFL), 110–130 (LGVF…IFVF), 137–157 (YVSL…ALIE), and 161–181 (LLIT…RENI).

This sequence belongs to the PlsY family. As to quaternary structure, probably interacts with PlsX.

Its subcellular location is the cell inner membrane. It carries out the reaction an acyl phosphate + sn-glycerol 3-phosphate = a 1-acyl-sn-glycero-3-phosphate + phosphate. Its pathway is lipid metabolism; phospholipid metabolism. Functionally, catalyzes the transfer of an acyl group from acyl-phosphate (acyl-PO(4)) to glycerol-3-phosphate (G3P) to form lysophosphatidic acid (LPA). This enzyme utilizes acyl-phosphate as fatty acyl donor, but not acyl-CoA or acyl-ACP. The chain is Glycerol-3-phosphate acyltransferase from Geotalea daltonii (strain DSM 22248 / JCM 15807 / FRC-32) (Geobacter daltonii).